Consider the following 236-residue polypeptide: Small ribosomal subunit protein uS2c (236 aa).

This sequence belongs to the universal ribosomal protein uS2 family.

It localises to the plastid. The protein localises to the chloroplast. In Lactuca sativa (Garden lettuce), this protein is Small ribosomal subunit protein uS2c (rps2).